Here is an 858-residue protein sequence, read N- to C-terminus: Myosin-K heavy chain (858 aa).

One can recognise a Myosin motor domain in the interval 7 to 820 (SGVDDLVLVS…TIFVMEDLLM (814 aa)). 100–107 (GESGAGKT) contacts ATP. The interval 121–265 (SPNNSSGGGI…GGGYGGSSKT (145 aa)) is disordered. Composition is skewed to gly residues over residues 126-139 (SGGG…GNGG) and 157-182 (RGMG…SRGG). Residues 183–228 (GPPPTRGRGGPPPPIPQNRGAPPPVSNGGAPPPVARGPVAPPPTRG) show a composition bias toward pro residues. Positions 233–245 (RGGGPANRGGRGG) are enriched in gly residues. Positions 712 to 722 (PHYIRCIKPND) are actin-binding. Positions 821-858 (QKIDPIGYKNRVQAYKENEKLAQMKQGKHSMKQKCLIQ) are tail.

This sequence belongs to the TRAFAC class myosin-kinesin ATPase superfamily. Myosin family.

The protein localises to the cytoplasm. Functionally, myosins are actin-based motor molecules with ATPase activity. Involved in phagocytosis and motility, and in the maintenance and dynamics of cell cortex. In Dictyostelium discoideum (Social amoeba), this protein is Myosin-K heavy chain (myoK).